We begin with the raw amino-acid sequence, 638 residues long: Guanylate-binding protein 7 (638 aa).

Residues 1–310 (MASGPNMEAP…DAINSGDVPC (310 aa)) are GTPase domain (Globular). Positions 35 to 277 (TQPVVVVAIV…FCSYIFSNSK (243 aa)) constitute a GB1/RHD3-type G domain. Residues 45–52 (GLYRTGKS), 67–69 (LGT), and 97–101 (DTEGL) contribute to the GTP site. Positions 311-638 (LENAVTTLAQ…TQNSDKVRKL (328 aa)) are interaction with the CYBA-CYBB complex. The segment at 590–638 (SSLGAKILDGFGDVLISVVPGSGKYFGLGLKILSSQMNQTQNSDKVRKL) is C-terminal tail; required for its localization to cytoplasmic vesicle.

Belongs to the TRAFAC class dynamin-like GTPase superfamily. GB1/RHD3 GTPase family. GB1 subfamily. In terms of assembly, monomer and dimer. Interacts with CYBA, CYBA-CYBB complex and ATG4B. Interacts (via GB1/RHD3-type G domain) with NCF2 and NCF2-NCF4 complex.

It localises to the cytoplasmic vesicle membrane. The catalysed reaction is GTP + H2O = GDP + phosphate + H(+). The enzyme catalyses GDP + H2O = GMP + phosphate + H(+). With respect to regulation, inhibited by orthovanadate, berylium fluoride and aluminum flouride. Interferon (IFN)-inducible GTPase that plays important roles in innate immunity against a diverse range of bacterial, viral and protozoan pathogens. Hydrolyzes GTP to GMP in two consecutive cleavage reactions and predominantly uses GTP and not GDP or GMP as the substrate. Following infection, recruited to the pathogen-containing vacuoles or vacuole-escaped bacteria and acts as a positive regulator of inflammasome assembly by promoting the release of inflammasome ligands from bacteria. Acts by promoting lysis of pathogen-containing vacuoles, releasing pathogens into the cytosol. Following pathogen release in the cytosol, promotes recruitment of proteins that mediate bacterial cytolysis, such as Gm12250/Irgb10: this liberates ligands that are detected by inflammasomes, such as lipopolysaccharide (LPS) that activates the non-canonical CASP4/CASP11 inflammasome or double-stranded DNA (dsDNA) that activates the AIM2 inflammasome. Also promotes IFN-gamma-mediated host defense against bacterial infections by regulating oxidative responses and bacteriolytic peptide generation. May help to assemble NADPH oxidase on phagosomal membranes by acting as a bridging protein between NADPH oxidase cytosolic subunits NCF2-NCF4 and the membrane subunits CYBA-CYBB. Participates along with GBP1 in trafficking monoubiquinated protein cargo to autolysosomes for generating ubiquitin-derived antimicrobial peptides. Facilitates influenza A virus replication by inhibiting the activation of NF-kappaB and JAK-STAT signaling pathways and the expression of type I, type III interferons and pro-inflammatory cytokines. Confers protection to several pathogens, including the bacterial pathogens Listeria monocytogenes and Mycobacterium bovis BCG as well as the protozoan pathogen Toxoplasma gondii. Required for disruption of the parasitophorous vacuole formed following T.gondii infection and subsequent killing of the parasite. In Mus musculus (Mouse), this protein is Guanylate-binding protein 7 (Gbp7).